A 183-amino-acid polypeptide reads, in one-letter code: MSNEENKINEEALKQQDAAEVEVEAVGTDADIEWNEEADESAAKIAELEAALLASEARVKEQQDSVLRAKAEVENMRRRTEQEIDKARKYALNRFAEELLPVIDNLERAIQAADAESEAVKPLLEGVELTHKTFVDVVSKFGLKEINPEGQPFNPEWHQAMSIQESPDHESNTVMFVMQKAMN.

Basic and acidic residues predominate over residues 1–14 (MSNEENKINEEALK). The tract at residues 1 to 20 (MSNEENKINEEALKQQDAAE) is disordered.

The protein belongs to the GrpE family. As to quaternary structure, homodimer.

It localises to the cytoplasm. Participates actively in the response to hyperosmotic and heat shock by preventing the aggregation of stress-denatured proteins, in association with DnaK and GrpE. It is the nucleotide exchange factor for DnaK and may function as a thermosensor. Unfolded proteins bind initially to DnaJ; upon interaction with the DnaJ-bound protein, DnaK hydrolyzes its bound ATP, resulting in the formation of a stable complex. GrpE releases ADP from DnaK; ATP binding to DnaK triggers the release of the substrate protein, thus completing the reaction cycle. Several rounds of ATP-dependent interactions between DnaJ, DnaK and GrpE are required for fully efficient folding. This is Protein GrpE from Vibrio vulnificus (strain CMCP6).